Consider the following 362-residue polypeptide: Peptide chain release factor 1 (362 aa).

N5-methylglutamine is present on Gln-240.

The protein belongs to the prokaryotic/mitochondrial release factor family. Post-translationally, methylated by PrmC. Methylation increases the termination efficiency of RF1.

It localises to the cytoplasm. Functionally, peptide chain release factor 1 directs the termination of translation in response to the peptide chain termination codons UAG and UAA. The protein is Peptide chain release factor 1 of Bifidobacterium longum subsp. infantis (strain ATCC 15697 / DSM 20088 / JCM 1222 / NCTC 11817 / S12).